We begin with the raw amino-acid sequence, 138 residues long: HTH-type transcriptional regulator CymR (138 aa).

The HTH rrf2-type domain occupies lysine 2–serine 125. A DNA-binding region (H-T-H motif) is located at residues leucine 28–asparagine 51.

In terms of assembly, homodimer. Forms homotetramers at higher concentrations of protein. Forms CymR(2):CysK(2) or CymR(4):CysK(4) complexes in the absence of O-acetylserine.

Master repressor of cysteine metabolism in B.subtilis. Controls the expression of genes involved either in cysteine synthesis from sulfide (cysK), sulfonates (ssu), or methionine (mccAB) or in cystine uptake (tcyP). Activity of CymR is positively regulated by CysK in response to cysteine availability. When cysteine is present, the pool of O-acetylserine (OAS) is low, which leads to the formation of a CymR-CysK complex and transcriptional repression of the CymR regulon occurs. In the absence of cysteine, the OAS pool is high and the CymR-CysK complex is mostly dissociated, leading to a faster dissociation of CymR from its DNA targets and the lifting of CymR-dependent repression. This is HTH-type transcriptional regulator CymR (cymR) from Bacillus subtilis (strain 168).